Here is a 38-residue protein sequence, read N- to C-terminus: Photosystem II reaction center protein L (38 aa).

A helical membrane pass occupies residues 17–37; it reads SLFWGLLLIFVLAILFSSYIF.

It belongs to the PsbL family. As to quaternary structure, PSII is composed of 1 copy each of membrane proteins PsbA, PsbB, PsbC, PsbD, PsbE, PsbF, PsbH, PsbI, PsbJ, PsbK, PsbL, PsbM, PsbT, PsbX, PsbY, PsbZ, Psb30/Ycf12, at least 3 peripheral proteins of the oxygen-evolving complex and a large number of cofactors. It forms dimeric complexes.

It is found in the plastid. Its subcellular location is the cyanelle thylakoid membrane. Its function is as follows. One of the components of the core complex of photosystem II (PSII). PSII is a light-driven water:plastoquinone oxidoreductase that uses light energy to abstract electrons from H(2)O, generating O(2) and a proton gradient subsequently used for ATP formation. It consists of a core antenna complex that captures photons, and an electron transfer chain that converts photonic excitation into a charge separation. This subunit is found at the monomer-monomer interface and is required for correct PSII assembly and/or dimerization. In Cyanophora paradoxa, this protein is Photosystem II reaction center protein L.